Reading from the N-terminus, the 336-residue chain is Ribosomal RNA small subunit methyltransferase C (336 aa).

It belongs to the methyltransferase superfamily. RsmC family. As to quaternary structure, monomer.

The protein resides in the cytoplasm. The catalysed reaction is guanosine(1207) in 16S rRNA + S-adenosyl-L-methionine = N(2)-methylguanosine(1207) in 16S rRNA + S-adenosyl-L-homocysteine + H(+). Its function is as follows. Specifically methylates the guanine in position 1207 of 16S rRNA in the 30S particle. The polypeptide is Ribosomal RNA small subunit methyltransferase C (Buchnera aphidicola subsp. Schizaphis graminum (strain Sg)).